Here is a 299-residue protein sequence, read N- to C-terminus: GTPase Era (299 aa).

The Era-type G domain maps to 5–172 (KSGFVSIIGR…IDVLKSFLPE (168 aa)). The segment at 13–20 (GRPNVGKS) is G1. 13-20 (GRPNVGKS) contacts GTP. Positions 39 to 43 (QTTRN) are G2. Residues 60 to 63 (DTPG) form a G3 region. GTP-binding positions include 60-64 (DTPGI) and 122-125 (NKID). The G4 stretch occupies residues 122–125 (NKID). Residues 151-153 (ISA) form a G5 region. One can recognise a KH type-2 domain in the interval 203 to 280 (TSEEIPHAIG…YLELWVKVQR (78 aa)).

Belongs to the TRAFAC class TrmE-Era-EngA-EngB-Septin-like GTPase superfamily. Era GTPase family. Monomer.

The protein resides in the cytoplasm. It localises to the cell membrane. In terms of biological role, an essential GTPase that binds both GDP and GTP, with rapid nucleotide exchange. Plays a role in 16S rRNA processing and 30S ribosomal subunit biogenesis and possibly also in cell cycle regulation and energy metabolism. The protein is GTPase Era of Staphylococcus epidermidis (strain ATCC 35984 / DSM 28319 / BCRC 17069 / CCUG 31568 / BM 3577 / RP62A).